Reading from the N-terminus, the 888-residue chain is Alanine--tRNA ligase (888 aa).

4 residues coordinate Zn(2+): His-564, His-568, Cys-676, and His-680.

It belongs to the class-II aminoacyl-tRNA synthetase family. It depends on Zn(2+) as a cofactor.

It is found in the cytoplasm. It catalyses the reaction tRNA(Ala) + L-alanine + ATP = L-alanyl-tRNA(Ala) + AMP + diphosphate. Functionally, catalyzes the attachment of alanine to tRNA(Ala) in a two-step reaction: alanine is first activated by ATP to form Ala-AMP and then transferred to the acceptor end of tRNA(Ala). Also edits incorrectly charged Ser-tRNA(Ala) and Gly-tRNA(Ala) via its editing domain. The protein is Alanine--tRNA ligase of Mesorhizobium japonicum (strain LMG 29417 / CECT 9101 / MAFF 303099) (Mesorhizobium loti (strain MAFF 303099)).